The sequence spans 651 residues: DNA mismatch repair protein MutL (651 aa).

Residues 383 to 405 (TAAEEPTPAPTSPDLEIGDLDDQ) are disordered.

The protein belongs to the DNA mismatch repair MutL/HexB family.

Functionally, this protein is involved in the repair of mismatches in DNA. It is required for dam-dependent methyl-directed DNA mismatch repair. May act as a 'molecular matchmaker', a protein that promotes the formation of a stable complex between two or more DNA-binding proteins in an ATP-dependent manner without itself being part of a final effector complex. The protein is DNA mismatch repair protein MutL of Lacticaseibacillus paracasei (strain ATCC 334 / BCRC 17002 / CCUG 31169 / CIP 107868 / KCTC 3260 / NRRL B-441) (Lactobacillus paracasei).